The primary structure comprises 320 residues: MSGGSSGGQQREREILLVAHPGRAEITETARRVGKIFERAGIGMRVLVDEVDSTRIEPMDGMAADEFLVPGLEVTIVQAGPDAALGCEMVLVLGGDGTFLRAAELAQAASIPVLGINLGRIGFLAETEAEHLDEALGQVVRREYRIEHRMTLDVLVRVDDEIIERGWALNEASIENRSRLGVLEVVLEVDGRPVSAFGCDGVLISTPTGSTAYAFSAGGPVVWPELEALLVVPSNAHALFARPLVTSPESLIAVETVAGSHDGLVFCDGRRTLELPAGARVEVVRGKEPVRWVRLDSAPFADRMVRKFELPVTGWRGRKP.

Aspartate 96 acts as the Proton acceptor in catalysis. Residues 96-97, arginine 101, 170-171, aspartate 200, and 211-216 contribute to the NAD(+) site; these read DG, NE, and TAYAFS.

It belongs to the NAD kinase family. A divalent metal cation serves as cofactor.

The protein resides in the cytoplasm. The enzyme catalyses NAD(+) + ATP = ADP + NADP(+) + H(+). Its function is as follows. Involved in the regulation of the intracellular balance of NAD and NADP, and is a key enzyme in the biosynthesis of NADP. Catalyzes specifically the phosphorylation on 2'-hydroxyl of the adenosine moiety of NAD to yield NADP. The chain is NAD kinase from Rhodococcus opacus (strain B4).